Here is a 382-residue protein sequence, read N- to C-terminus: 6-oxocyclohex-1-ene-1-carbonyl-CoA hydrolase (382 aa).

It belongs to the enoyl-CoA hydratase/isomerase family. In terms of assembly, homohexamer.

The catalysed reaction is 6-oxocyclohex-1-ene-1-carbonyl-CoA + 2 H2O = 3-hydroxy-6-carboxyhexanoyl-CoA + H(+). It functions in the pathway aromatic compound metabolism; benzoyl-CoA degradation. Involved in the central benzoyl-CoA catabolism. Catalyzes the addition of one molecule of water to the double bond and the hydrolytic cleavage of C-C bond in the alicyclic ring, 6-oxocyclohex-1-ene-1-carbonyl-CoA (6-OCH-CoA) to yield 3-hydroxypimelyl-CoA. This chain is 6-oxocyclohex-1-ene-1-carbonyl-CoA hydrolase, found in Syntrophus aciditrophicus (strain SB).